Here is a 195-residue protein sequence, read N- to C-terminus: Imidazoleglycerol-phosphate dehydratase (195 aa).

Belongs to the imidazoleglycerol-phosphate dehydratase family.

The protein resides in the cytoplasm. The enzyme catalyses D-erythro-1-(imidazol-4-yl)glycerol 3-phosphate = 3-(imidazol-4-yl)-2-oxopropyl phosphate + H2O. It participates in amino-acid biosynthesis; L-histidine biosynthesis; L-histidine from 5-phospho-alpha-D-ribose 1-diphosphate: step 6/9. In Hydrogenovibrio crunogenus (strain DSM 25203 / XCL-2) (Thiomicrospira crunogena), this protein is Imidazoleglycerol-phosphate dehydratase.